The chain runs to 320 residues: Biotin synthase (320 aa).

Positions 45–274 (NDLQKASLLS…DSRIRLSAGR (230 aa)) constitute a Radical SAM core domain. [4Fe-4S] cluster-binding residues include Cys60, Cys64, and Cys67. [2Fe-2S] cluster is bound by residues Cys105, Cys137, Cys197, and Arg269.

Belongs to the radical SAM superfamily. Biotin synthase family. As to quaternary structure, homodimer. Requires [4Fe-4S] cluster as cofactor. [2Fe-2S] cluster is required as a cofactor.

It carries out the reaction (4R,5S)-dethiobiotin + (sulfur carrier)-SH + 2 reduced [2Fe-2S]-[ferredoxin] + 2 S-adenosyl-L-methionine = (sulfur carrier)-H + biotin + 2 5'-deoxyadenosine + 2 L-methionine + 2 oxidized [2Fe-2S]-[ferredoxin]. Its pathway is cofactor biosynthesis; biotin biosynthesis; biotin from 7,8-diaminononanoate: step 2/2. Catalyzes the conversion of dethiobiotin (DTB) to biotin by the insertion of a sulfur atom into dethiobiotin via a radical-based mechanism. This is Biotin synthase from Beijerinckia indica subsp. indica (strain ATCC 9039 / DSM 1715 / NCIMB 8712).